A 180-amino-acid polypeptide reads, in one-letter code: Cancer/testis antigen 1 (180 aa).

Composition is skewed to gly residues over residues 1 to 47 (MQAE…GPRG) and 55 to 66 (GPGGGAPRGPHG). The segment at 1-66 (MQAEGRGTGG…GGGAPRGPHG (66 aa)) is disordered.

Belongs to the CTAG/PCC1 family. In terms of tissue distribution, expressed in testis and ovary and in a wide variety of cancers. Detected in uterine myometrium. Expressed from 18 weeks until birth in human fetal testis. In the adult testis, is strongly expressed in spermatogonia and in primary spermatocytes, but not in post-meiotic cells or in testicular somatic cells (at protein level).

The protein resides in the cytoplasm. In Homo sapiens (Human), this protein is Cancer/testis antigen 1 (CTAG1A).